The sequence spans 212 residues: External core antigen (212 aa).

The N-terminal stretch at 1 to 19 is a signal peptide; the sequence is MQLFHLCLIISCSCPTVQA. The tract at residues 25-27 is HBEAG; the sequence is GWL. Residues 165–212 are disordered; that stretch reads NAPILSTLPETTVVRRRGRSPRRRTPSPRRRRSQSPRRRRSQSRESQC. Positions 178 to 205 are enriched in basic residues; sequence VRRRGRSPRRRTPSPRRRRSQSPRRRRS. The 1; half-length repeat unit spans residues 184-190; the sequence is SPRRRTP. The tract at residues 184 to 206 is 3 X 8 AA repeats of S-P-R-R-R-R-S-Q; it reads SPRRRTPSPRRRRSQSPRRRRSQ. A propeptide spanning residues 184-212 is cleaved from the precursor; sequence SPRRRTPSPRRRRSQSPRRRRSQSRESQC. 2 consecutive repeat copies span residues 191-198 and 199-206.

It belongs to the orthohepadnavirus precore antigen family. As to quaternary structure, homodimerizes. Post-translationally, phosphorylated. In terms of processing, cleaved by host furin.

Its subcellular location is the secreted. It localises to the host nucleus. In terms of biological role, may regulate immune response to the intracellular capsid in acting as a T-cell tolerogen, by having an immunoregulatory effect which prevents destruction of infected cells by cytotoxic T-cells. This immune regulation may predispose to chronicity during perinatal infections and prevent severe liver injury during adult infections. This Homo sapiens (Human) protein is External core antigen.